The chain runs to 206 residues: Large ribosomal subunit protein uL4 (206 aa).

It belongs to the universal ribosomal protein uL4 family. As to quaternary structure, part of the 50S ribosomal subunit.

Its function is as follows. One of the primary rRNA binding proteins, this protein initially binds near the 5'-end of the 23S rRNA. It is important during the early stages of 50S assembly. It makes multiple contacts with different domains of the 23S rRNA in the assembled 50S subunit and ribosome. Forms part of the polypeptide exit tunnel. The polypeptide is Large ribosomal subunit protein uL4 (Methylorubrum populi (strain ATCC BAA-705 / NCIMB 13946 / BJ001) (Methylobacterium populi)).